The following is a 104-amino-acid chain: Biogenesis of lysosome-related organelles complex 1 subunit BLS1 (104 aa).

The protein belongs to the BLOC1S1 family. In terms of assembly, component of the biogenesis of lysosome-related organelles complex-1 (BLOC-1).

Its subcellular location is the endosome. In terms of biological role, component of the biogenesis of lysosome-related organelles complex-1 (BLOC-1), a complex involved in endosomal cargo sorting. In Kluyveromyces lactis (strain ATCC 8585 / CBS 2359 / DSM 70799 / NBRC 1267 / NRRL Y-1140 / WM37) (Yeast), this protein is Biogenesis of lysosome-related organelles complex 1 subunit BLS1 (BLS1).